A 364-amino-acid chain; its full sequence is Paraneoplastic antigen Ma2 (364 aa).

Alanine 2 bears the N-acetylalanine mark. The span at 335 to 351 (EEEEASFENESIEEPEE) shows a compositional bias: acidic residues. Residues 335–364 (EEEEASFENESIEEPEERDGYGRWNHEGDD) form a disordered region. The span at 352 to 364 (RDGYGRWNHEGDD) shows a compositional bias: basic and acidic residues.

The protein belongs to the PNMA family. In terms of tissue distribution, brain-specific. In some cancer patients, specifically expressed by testicular tumor cells.

It is found in the nucleus. The protein resides in the nucleolus. The protein is Paraneoplastic antigen Ma2 (PNMA2) of Homo sapiens (Human).